Here is a 467-residue protein sequence, read N- to C-terminus: Acetaldehyde dehydrogenase (acetylating) EutE (467 aa).

The segment at 1–19 (MNQQDIEQVVKAVLLKMKD) is targets protein to the BMC.

Belongs to the EutE/PduP family. In terms of assembly, interacts with EutS, which targets it to the interior of the BMC.

It is found in the bacterial microcompartment. It catalyses the reaction acetaldehyde + NAD(+) + CoA = acetyl-CoA + NADH + H(+). Its pathway is amine and polyamine degradation; ethanolamine degradation. Its function is as follows. Acts as the second step in ethanolamine degradation by converting acetaldehyde into acetyl-CoA. Has a very strong preference for NAD(+) over NADP(+) in both catalytic directions. May play a role in bacterial microcompartment (BMC) assembly or maintenance. Directly targeted to the BMC. Functionally, expression of the eut operon allows this bacteria to use ethanolamine (EA) as a carbon, nitrogen and energy source. It relies on cobalamin (vitamin B12) both as a cofactor for the ethanolamine ammonia-lyase (EAL) activity and to induce the operon. EA enhances bacterial survival in macrophages in a concentration-dependent manner, suggesting it is an important nutrient during infection. This Salmonella typhimurium (strain LT2 / SGSC1412 / ATCC 700720) protein is Acetaldehyde dehydrogenase (acetylating) EutE.